We begin with the raw amino-acid sequence, 349 residues long: Ribosomal RNA small subunit methyltransferase H 1 (349 aa).

Residues 79–81 (GGH), Asp99, Phe129, Asp148, and Gln155 each bind S-adenosyl-L-methionine.

Belongs to the methyltransferase superfamily. RsmH family.

The protein localises to the cytoplasm. The enzyme catalyses cytidine(1402) in 16S rRNA + S-adenosyl-L-methionine = N(4)-methylcytidine(1402) in 16S rRNA + S-adenosyl-L-homocysteine + H(+). Specifically methylates the N4 position of cytidine in position 1402 (C1402) of 16S rRNA. In Agathobacter rectalis (strain ATCC 33656 / DSM 3377 / JCM 17463 / KCTC 5835 / VPI 0990) (Eubacterium rectale), this protein is Ribosomal RNA small subunit methyltransferase H 1.